Reading from the N-terminus, the 245-residue chain is OVARIAN TUMOR DOMAIN-containing deubiquitinating enzyme 11 (245 aa).

Residues 1-37 (MDENHRNPFANASTSARASGSTSASSNSSFSSSVADT) form a disordered region. The span at 10-35 (ANASTSARASGSTSASSNSSFSSSVA) shows a compositional bias: low complexity. The 125-residue stretch at 101–225 (LAELQMEGDG…EVHYNSLYAN (125 aa)) folds into the OTU domain. Aspartate 109 is an active-site residue. Cysteine 112 (nucleophile) is an active-site residue. The active site involves histidine 218.

Belongs to the peptidase C85 family.

The catalysed reaction is Thiol-dependent hydrolysis of ester, thioester, amide, peptide and isopeptide bonds formed by the C-terminal Gly of ubiquitin (a 76-residue protein attached to proteins as an intracellular targeting signal).. Hydrolase that can remove conjugated ubiquitin from proteins in vitro and may therefore play an important regulatory role at the level of protein turnover by preventing degradation. Inactive cysteine protease. This chain is OVARIAN TUMOR DOMAIN-containing deubiquitinating enzyme 11, found in Arabidopsis thaliana (Mouse-ear cress).